Consider the following 56-residue polypeptide: MSYDFTQYQRPSGRLLARKDFLHVVAVRDAPHDGKYAVEVPVHVTRTCLILLPRKI.

This is an uncharacterized protein from Treponema pallidum (strain Nichols).